The following is a 321-amino-acid chain: Anther-specific protein TA-29 (321 aa).

The disordered stretch occupies residues 301-321; that stretch reads RSDEEEAHHQSKQHKDEDIIN.

As to expression, anther specific (tapetal cells).

The chain is Anther-specific protein TA-29 (TA-29) from Nicotiana tabacum (Common tobacco).